Consider the following 658-residue polypeptide: Threonine--tRNA ligase (658 aa).

In terms of domain architecture, TGS spans 1–64 (MSFSISLSFP…EQSGQVEIIT (64 aa)). The tract at residues 246–549 (DHRRLGREMD…LIENFAGHMP (304 aa)) is catalytic. Zn(2+) is bound by residues cysteine 343, histidine 394, and histidine 526.

It belongs to the class-II aminoacyl-tRNA synthetase family. As to quaternary structure, homodimer. Zn(2+) serves as cofactor.

It is found in the cytoplasm. The catalysed reaction is tRNA(Thr) + L-threonine + ATP = L-threonyl-tRNA(Thr) + AMP + diphosphate + H(+). Catalyzes the attachment of threonine to tRNA(Thr) in a two-step reaction: L-threonine is first activated by ATP to form Thr-AMP and then transferred to the acceptor end of tRNA(Thr). Also edits incorrectly charged L-seryl-tRNA(Thr). The sequence is that of Threonine--tRNA ligase from Bartonella bacilliformis (strain ATCC 35685 / KC583 / Herrer 020/F12,63).